Here is a 241-residue protein sequence, read N- to C-terminus: Methylthioribulose-1-phosphate dehydratase (241 aa).

The segment covering 1-17 has biased composition (polar residues); the sequence is MAKQVENNNNDHLVQST. Residues 1 to 21 are disordered; that stretch reads MAKQVENNNNDHLVQSTDPEH. Cysteine 100 serves as a coordination point for substrate. Zn(2+) is bound by residues histidine 117 and histidine 119. Catalysis depends on glutamate 146, which acts as the Proton donor/acceptor. A Zn(2+)-binding site is contributed by histidine 202.

It belongs to the aldolase class II family. MtnB subfamily. Requires Zn(2+) as cofactor.

The protein resides in the cytoplasm. It carries out the reaction 5-(methylsulfanyl)-D-ribulose 1-phosphate = 5-methylsulfanyl-2,3-dioxopentyl phosphate + H2O. Its pathway is amino-acid biosynthesis; L-methionine biosynthesis via salvage pathway; L-methionine from S-methyl-5-thio-alpha-D-ribose 1-phosphate: step 2/6. Functionally, catalyzes the dehydration of methylthioribulose-1-phosphate (MTRu-1-P) into 2,3-diketo-5-methylthiopentyl-1-phosphate (DK-MTP-1-P). This Aspergillus flavus (strain ATCC 200026 / FGSC A1120 / IAM 13836 / NRRL 3357 / JCM 12722 / SRRC 167) protein is Methylthioribulose-1-phosphate dehydratase.